Consider the following 145-residue polypeptide: Ribonuclease H (145 aa).

The RNase H type-1 domain occupies 1 to 141; the sequence is MQEVTIYSDG…ADALANRGVA (141 aa). Mg(2+)-binding residues include Asp-9, Glu-47, Asp-69, and Asp-133.

The protein belongs to the RNase H family. As to quaternary structure, monomer. Mg(2+) serves as cofactor.

It localises to the cytoplasm. The enzyme catalyses Endonucleolytic cleavage to 5'-phosphomonoester.. Functionally, endonuclease that specifically degrades the RNA of RNA-DNA hybrids. The protein is Ribonuclease H of Cupriavidus metallidurans (strain ATCC 43123 / DSM 2839 / NBRC 102507 / CH34) (Ralstonia metallidurans).